We begin with the raw amino-acid sequence, 337 residues long: MTETLRVAVIGAGRMGADHIQRLHQRIHGAEVAAVVDVDLARAQAAIEGIPGAVALADAEEALNNGDVNAVLIATPGFLHEDILLKAIAKDIPILCEKPLTPDAESSLKIVEAEVALGRKRIQVGFMRRFDAEYAALGSIIRNQELGELLMLHHQHRNPTTPAGFTNEMLINDSVVHEFDAIRFFTGEEITSVQVRLGKVTKNAPAGQHDPQHVLIETESGVLADVEIYVNAKFGYEVATQASFEDGIVSIGGDKGPYTRSAGRWGGNVTPGFEERFGAAYDVEIQSWVDAALRGEIGGPSAWDGYATAACCEAGVEAQKNGEKVAVKLAAKPDLYS.

The protein belongs to the Gfo/Idh/MocA family. Homotetramer.

The catalysed reaction is myo-inositol + NAD(+) = scyllo-inosose + NADH + H(+). In terms of biological role, involved in the oxidation of myo-inositol (MI) to 2-keto-myo-inositol (2KMI or 2-inosose). The chain is Inositol 2-dehydrogenase from Pseudarthrobacter chlorophenolicus (strain ATCC 700700 / DSM 12829 / CIP 107037 / JCM 12360 / KCTC 9906 / NCIMB 13794 / A6) (Arthrobacter chlorophenolicus).